The sequence spans 512 residues: Histidine ammonia-lyase (512 aa).

The 5-imidazolinone (Ala-Gly) cross-link spans 142-144 (ASG). The residue at position 143 (Ser-143) is a 2,3-didehydroalanine (Ser).

It belongs to the PAL/histidase family. Contains an active site 4-methylidene-imidazol-5-one (MIO), which is formed autocatalytically by cyclization and dehydration of residues Ala-Ser-Gly.

Its subcellular location is the cytoplasm. The catalysed reaction is L-histidine = trans-urocanate + NH4(+). It functions in the pathway amino-acid degradation; L-histidine degradation into L-glutamate; N-formimidoyl-L-glutamate from L-histidine: step 1/3. The sequence is that of Histidine ammonia-lyase from Bartonella tribocorum (strain CIP 105476 / IBS 506).